The primary structure comprises 93 residues: MPRSLKKGPFVDMHLLKKVRAGNESKDRNMIKTWSRRSMIIPEMLGHTIAVHDGRRHIPVFITESMVGHKLGEFAPTRTYRGHVKDDRKARRR.

This sequence belongs to the universal ribosomal protein uS19 family.

Functionally, protein S19 forms a complex with S13 that binds strongly to the 16S ribosomal RNA. In Tropheryma whipplei (strain TW08/27) (Whipple's bacillus), this protein is Small ribosomal subunit protein uS19.